Consider the following 283-residue polypeptide: Phosphate import ATP-binding protein PstB (283 aa).

A compositionally biased stretch (polar residues) spans 1–20 (MAQTLAQTKQISQSHTFDVS). The tract at residues 1-33 (MAQTLAQTKQISQSHTFDVSQSHHKTPNDTNSH) is disordered. The ABC transporter domain maps to 37 to 278 (YSTQNLDLWY…PSNKKTEDYI (242 aa)). 69 to 76 (GPSGCGKS) provides a ligand contact to ATP.

Belongs to the ABC transporter superfamily. Phosphate importer (TC 3.A.1.7) family. In terms of assembly, the complex is composed of two ATP-binding proteins (PstB), two transmembrane proteins (PstC and PstA) and a solute-binding protein (PstS).

It localises to the cell membrane. It carries out the reaction phosphate(out) + ATP + H2O = ADP + 2 phosphate(in) + H(+). Part of the ABC transporter complex PstSACB involved in phosphate import. Responsible for energy coupling to the transport system. The polypeptide is Phosphate import ATP-binding protein PstB (Staphylococcus aureus (strain bovine RF122 / ET3-1)).